Reading from the N-terminus, the 354-residue chain is UDP-N-acetylglucosamine--N-acetylmuramyl-(pentapeptide) pyrophosphoryl-undecaprenol N-acetylglucosamine transferase (354 aa).

UDP-N-acetyl-alpha-D-glucosamine contacts are provided by residues Thr11–Gly13, Arg164, Ser194, and Gln289.

It belongs to the glycosyltransferase 28 family. MurG subfamily.

Its subcellular location is the cell membrane. It carries out the reaction di-trans,octa-cis-undecaprenyl diphospho-N-acetyl-alpha-D-muramoyl-L-alanyl-D-glutamyl-meso-2,6-diaminopimeloyl-D-alanyl-D-alanine + UDP-N-acetyl-alpha-D-glucosamine = di-trans,octa-cis-undecaprenyl diphospho-[N-acetyl-alpha-D-glucosaminyl-(1-&gt;4)]-N-acetyl-alpha-D-muramoyl-L-alanyl-D-glutamyl-meso-2,6-diaminopimeloyl-D-alanyl-D-alanine + UDP + H(+). Its pathway is cell wall biogenesis; peptidoglycan biosynthesis. Functionally, cell wall formation. Catalyzes the transfer of a GlcNAc subunit on undecaprenyl-pyrophosphoryl-MurNAc-pentapeptide (lipid intermediate I) to form undecaprenyl-pyrophosphoryl-MurNAc-(pentapeptide)GlcNAc (lipid intermediate II). The protein is UDP-N-acetylglucosamine--N-acetylmuramyl-(pentapeptide) pyrophosphoryl-undecaprenol N-acetylglucosamine transferase of Clostridium botulinum (strain Loch Maree / Type A3).